We begin with the raw amino-acid sequence, 2191 residues long: FRAS1-related extracellular matrix protein 1 (2191 aa).

The signal sequence occupies residues 1 to 29; the sequence is MHSPGCTGPKAQWFLLLQLLLLHLDRVSA. The Cell attachment site signature appears at 205–207; sequence RGD. CSPG repeat units lie at residues 300–394, 419–506, and 527–621; these read VPRA…MELE, APRV…FRIF, and PPFL…FVLW. Asn-341 carries N-linked (GlcNAc...) asparagine glycosylation. N-linked (GlcNAc...) asparagine glycosylation is found at Asn-566 and Asn-628. CSPG repeat units follow at residues 648-779, 801-892, and 912-1007; these read KEAP…VSVS, QVPE…LEVT, and EPPI…LVVS. The N-linked (GlcNAc...) asparagine glycan is linked to Asn-1039. CSPG repeat units follow at residues 1049–1151, 1172–1273, 1294–1391, 1412–1504, 1525–1614, and 1650–1742; these read PPSI…VYAT, EAPD…IQLS, TPTL…FYLW, GDIV…FTIS, LPVL…FLAT, and HLHS…FQAM. The N-linked (GlcNAc...) asparagine glycan is linked to Asn-1180. The N-linked (GlcNAc...) asparagine glycan is linked to Asn-1584. The Calx-beta domain occupies 1749–1848; that stretch reads ATPQSLDLRW…DDEVFEVILN (100 aa). The disordered stretch occupies residues 1874 to 1921; the sequence is HPSNSFNQSKHSTWGKGPWHPLPSGSSSLTTSGSPLLERPPPSFTSGD. The segment covering 1875–1885 has biased composition (polar residues); it reads PSNSFNQSKHS. A compositionally biased stretch (low complexity) spans 1895 to 1910; that stretch reads LPSGSSSLTTSGSPLL. The C-type lectin domain maps to 2072–2186; that stretch reads HSGYCHILVT…CSKGKAHNFV (115 aa). Cys-2163 and Cys-2177 form a disulfide bridge.

Belongs to the FRAS1 family. In terms of assembly, interacts with FREM2. As to expression, expressed in epidermis and hair follicles. Expressed in many developing epidermal appendages, including the whisker and sensory vibrissae, cranial and trunk hair follicles, meibomian glands, teeth, footpads, eyelash primordia and invaginating mammary glands. Limb expression localizes to sheets of dermal cells on the apical and basal surfaces of the digits but, unlike FRAS1, is excluded from the apical ectodermal ridge. Usually expressed at higher level in dermal cells underlying the differentiating epithelial components, especially underlying the epidermis of the head, limbs, and eyelids. Expression in the eyelid dermis is apparent as early as 13 dpc. Postnatal expression in the skin is limited to the dermal papillae. In the kidney, it is expressed from 12.5 dpc in the mesenchyme surrounding the branching ureteric tree, with a strong expression in the more proximal regions of these tubules rather than at the proliferating and branching ends of the ureteric buds. In hair follicle, it is selectively expressed in the vibrissal hair primordia during development. Preferentially expressed in the whisker pad epithelia of 12.5 dpc embryos, in both the epithelial and mesenchymal cells of developing hair follicles. In the early stages of hair follicle development (i.e. stages 0-1), it is expressed in both hair placodes and dermal condensations. In stage 2, it is detected in dermal condensations and adjacent epithelia, but not in the upper region of the hair follicles. Expressed at the tip of developing hair follicles in the later stages (i.e. stages 3-5).

Its subcellular location is the secreted. It localises to the extracellular space. The protein resides in the extracellular matrix. The protein localises to the basement membrane. In terms of biological role, extracellular matrix protein that plays a role in epidermal differentiation and is required for epidermal adhesion during embryonic development. The protein is FRAS1-related extracellular matrix protein 1 (Frem1) of Mus musculus (Mouse).